A 239-amino-acid chain; its full sequence is MLGGSVKSEVRASEPSPTCQDPETKAPHQDLPRPNQPAASGSVPSRPRRRPPPQRPHRCPDCPKAFSYPSKLATHRLAHGGTRPHPCPDCPKAFSYPSKLAAHRLTHSGARPHSCPHCPKAFGHRSKLAAHLWTHAPARPYPCPDCPKSFCYPSKLAAHRHTHHATDARPYPCPHCPKAFSFPSKLAAHRLCHDPPTAPSSQATGSHRCSSCNQAFGQRRLLLVHQRSHHQSEGQGERE.

Positions 1 to 62 (MLGGSVKSEV…PQRPHRCPDC (62 aa)) are disordered. A compositionally biased stretch (basic and acidic residues) spans 22-31 (PETKAPHQDL). Over residues 46 to 57 (RPRRRPPPQRPH) the composition is skewed to basic residues. 6 consecutive C2H2-type zinc fingers follow at residues 57 to 79 (HRCP…RLAH), 85 to 107 (HPCP…RLTH), 113 to 135 (HSCP…LWTH), 141 to 163 (YPCP…RHTH), 171 to 193 (YPCP…RLCH), and 207 to 230 (HRCS…RSHH).

This sequence belongs to the krueppel C2H2-type zinc-finger protein family.

It localises to the nucleus. Its function is as follows. May be involved in transcriptional regulation. The protein is Zinc finger protein 575 (Znf575) of Mus musculus (Mouse).